The following is a 631-amino-acid chain: 1-deoxy-D-xylulose-5-phosphate synthase (631 aa).

Thiamine diphosphate-binding positions include H87 and 128 to 130; that span reads GHS. Residue D159 participates in Mg(2+) binding. Thiamine diphosphate is bound by residues 160 to 161, N188, F295, and E377; that span reads GA. N188 lines the Mg(2+) pocket.

The protein belongs to the transketolase family. DXPS subfamily. As to quaternary structure, homodimer. Requires Mg(2+) as cofactor. Thiamine diphosphate is required as a cofactor.

The enzyme catalyses D-glyceraldehyde 3-phosphate + pyruvate + H(+) = 1-deoxy-D-xylulose 5-phosphate + CO2. It participates in metabolic intermediate biosynthesis; 1-deoxy-D-xylulose 5-phosphate biosynthesis; 1-deoxy-D-xylulose 5-phosphate from D-glyceraldehyde 3-phosphate and pyruvate: step 1/1. In terms of biological role, catalyzes the acyloin condensation reaction between C atoms 2 and 3 of pyruvate and glyceraldehyde 3-phosphate to yield 1-deoxy-D-xylulose-5-phosphate (DXP). This chain is 1-deoxy-D-xylulose-5-phosphate synthase, found in Pseudomonas putida (strain GB-1).